We begin with the raw amino-acid sequence, 323 residues long: Serine/threonine-protein phosphatase PP1-gamma catalytic subunit B (323 aa).

4 residues coordinate Mn(2+): Asp-64, His-66, Asp-92, and Asn-124. His-125 acts as the Proton donor in catalysis. Positions 173 and 248 each coordinate Mn(2+). The disordered stretch occupies residues 301-323; the sequence is KKKPNASRPVTPPRGIITKQAKK.

The protein belongs to the PPP phosphatase family. PP-1 subfamily. In terms of assembly, PP1 comprises a catalytic subunit, ppp1c1, ppp1cb or ppp1cc, which is folded into its native form by inhibitor 2 and glycogen synthetase kinase 3, and then is complexed to one or several targeting or regulatory subunits. Requires Mn(2+) as cofactor.

The protein localises to the cytoplasm. Its subcellular location is the nucleus. The protein resides in the cleavage furrow. It is found in the nucleolus. It localises to the nucleoplasm. The protein localises to the chromosome. Its subcellular location is the centromere. The protein resides in the kinetochore. It is found in the nucleus speckle. It localises to the midbody. The protein localises to the mitochondrion. It carries out the reaction O-phospho-L-seryl-[protein] + H2O = L-seryl-[protein] + phosphate. It catalyses the reaction O-phospho-L-threonyl-[protein] + H2O = L-threonyl-[protein] + phosphate. Its function is as follows. Protein phosphatase that associates with over 200 regulatory proteins to form highly specific holoenzymes which dephosphorylate hundreds of biological targets. Protein phosphatase 1 (PP1) is essential for cell division, and participates in the regulation of glycogen metabolism, muscle contractility and protein synthesis. Promotes nuclear envelope reassembly by targeting nuclear membrane vesicles to chromatin at the end of mitosis. Acts by dephosphorylating membrane proteins such as lamin B receptor (lbr) to regulate the binding of membrane proteins to chromatin. This Xenopus laevis (African clawed frog) protein is Serine/threonine-protein phosphatase PP1-gamma catalytic subunit B (ppp1cc-b).